A 225-amino-acid polypeptide reads, in one-letter code: Urease accessory protein UreG (225 aa).

A disordered region spans residues Met-1 to Asp-21. Gly-33–Thr-40 lines the GTP pocket.

It belongs to the SIMIBI class G3E GTPase family. UreG subfamily. Homodimer. UreD, UreF and UreG form a complex that acts as a GTP-hydrolysis-dependent molecular chaperone, activating the urease apoprotein by helping to assemble the nickel containing metallocenter of UreC. The UreE protein probably delivers the nickel.

Its subcellular location is the cytoplasm. In terms of biological role, facilitates the functional incorporation of the urease nickel metallocenter. This process requires GTP hydrolysis, probably effectuated by UreG. The sequence is that of Urease accessory protein UreG from Streptomyces coelicolor (strain ATCC BAA-471 / A3(2) / M145).